Reading from the N-terminus, the 458-residue chain is Exodeoxyribonuclease 7 large subunit (458 aa).

It belongs to the XseA family. In terms of assembly, heterooligomer composed of large and small subunits.

The protein localises to the cytoplasm. The catalysed reaction is Exonucleolytic cleavage in either 5'- to 3'- or 3'- to 5'-direction to yield nucleoside 5'-phosphates.. Its function is as follows. Bidirectionally degrades single-stranded DNA into large acid-insoluble oligonucleotides, which are then degraded further into small acid-soluble oligonucleotides. In Shouchella clausii (strain KSM-K16) (Alkalihalobacillus clausii), this protein is Exodeoxyribonuclease 7 large subunit.